Consider the following 730-residue polypeptide: Catalase-peroxidase (730 aa).

A cross-link (tryptophyl-tyrosyl-methioninium (Trp-Tyr) (with M-244)) is located at residues 95 to 218 (WHSAGTYRVG…LAAVQMGLIY (124 aa)). The Proton acceptor role is filled by His96. The segment at residues 218–244 (YVNPEGPNGNPDPLGSAHDVRETFARM) is a cross-link (tryptophyl-tyrosyl-methioninium (Tyr-Met) (with W-95)). His259 is a binding site for heme b.

This sequence belongs to the peroxidase family. Peroxidase/catalase subfamily. Homodimer or homotetramer. Requires heme b as cofactor. Post-translationally, formation of the three residue Trp-Tyr-Met cross-link is important for the catalase, but not the peroxidase activity of the enzyme.

The enzyme catalyses H2O2 + AH2 = A + 2 H2O. It catalyses the reaction 2 H2O2 = O2 + 2 H2O. In terms of biological role, bifunctional enzyme with both catalase and broad-spectrum peroxidase activity. The sequence is that of Catalase-peroxidase from Clostridium botulinum (strain Eklund 17B / Type B).